The chain runs to 232 residues: Large ribosomal subunit protein uL1 (232 aa).

This sequence belongs to the universal ribosomal protein uL1 family. Part of the 50S ribosomal subunit.

Binds directly to 23S rRNA. The L1 stalk is quite mobile in the ribosome, and is involved in E site tRNA release. In terms of biological role, protein L1 is also a translational repressor protein, it controls the translation of the L11 operon by binding to its mRNA. This Sinorhizobium medicae (strain WSM419) (Ensifer medicae) protein is Large ribosomal subunit protein uL1.